The following is a 291-amino-acid chain: 33 kDa chaperonin (291 aa).

2 disulfide bridges follow: C235-C237 and C268-C271.

This sequence belongs to the HSP33 family. Post-translationally, under oxidizing conditions two disulfide bonds are formed involving the reactive cysteines. Under reducing conditions zinc is bound to the reactive cysteines and the protein is inactive.

It localises to the cytoplasm. Its function is as follows. Redox regulated molecular chaperone. Protects both thermally unfolding and oxidatively damaged proteins from irreversible aggregation. Plays an important role in the bacterial defense system toward oxidative stress. This is 33 kDa chaperonin from Streptococcus agalactiae serotype Ia (strain ATCC 27591 / A909 / CDC SS700).